The sequence spans 288 residues: Glucose uptake protein GlcU (288 aa).

The next 10 helical transmembrane spans lie at 4 to 26 (LIAL…VGGG), 33 to 51 (GTTF…TGNA), 56 to 75 (LTII…GQGY), 82 to 104 (LIGV…TLFS), 114 to 136 (GVQV…LTSI), 148 to 170 (NFGK…VVVA), 180 to 197 (ALFF…ILSA), 206 to 225 (TLWN…FMFY), 230 to 252 (VGVA…GGIF), and 264 to 283 (IGIW…SEIL).

This sequence belongs to the GRP transporter (TC 2.A.7.5) family.

The protein resides in the cell membrane. Involved in the uptake of glucose. This is Glucose uptake protein GlcU (glcU) from Staphylococcus xylosus.